We begin with the raw amino-acid sequence, 142 residues long: Transcriptional regulator MraZ (142 aa).

2 SpoVT-AbrB domains span residues 5-51 (ASAL…PRPE) and 77-120 (AADV…DAAT).

It belongs to the MraZ family. In terms of assembly, forms oligomers.

The protein resides in the cytoplasm. It is found in the nucleoid. The protein is Transcriptional regulator MraZ of Ralstonia pickettii (strain 12J).